The following is a 497-amino-acid chain: Glycerol kinase (497 aa).

Thr11 contacts ADP. Residues Thr11, Thr12, and Ser13 each coordinate ATP. Thr11 is a sn-glycerol 3-phosphate binding site. An ADP-binding site is contributed by Arg15. The sn-glycerol 3-phosphate site is built by Arg81, Glu82, Tyr134, and Asp244. Residues Arg81, Glu82, Tyr134, Asp244, and Gln245 each coordinate glycerol. Positions 266 and 309 each coordinate ADP. Positions 266, 309, 313, and 410 each coordinate ATP. ADP-binding residues include Gly410 and Asn414.

The protein belongs to the FGGY kinase family.

It catalyses the reaction glycerol + ATP = sn-glycerol 3-phosphate + ADP + H(+). Its pathway is polyol metabolism; glycerol degradation via glycerol kinase pathway; sn-glycerol 3-phosphate from glycerol: step 1/1. With respect to regulation, inhibited by fructose 1,6-bisphosphate (FBP). Its function is as follows. Key enzyme in the regulation of glycerol uptake and metabolism. Catalyzes the phosphorylation of glycerol to yield sn-glycerol 3-phosphate. The sequence is that of Glycerol kinase from Fusobacterium nucleatum subsp. nucleatum (strain ATCC 25586 / DSM 15643 / BCRC 10681 / CIP 101130 / JCM 8532 / KCTC 2640 / LMG 13131 / VPI 4355).